The primary structure comprises 202 residues: LexA repressor (202 aa).

Positions Arg-28–Lys-48 form a DNA-binding region, H-T-H motif. Active-site for autocatalytic cleavage activity residues include Ser-119 and Lys-156.

It belongs to the peptidase S24 family. Homodimer.

The catalysed reaction is Hydrolysis of Ala-|-Gly bond in repressor LexA.. Represses a number of genes involved in the response to DNA damage (SOS response), including recA and lexA. Binds to the 16 bp palindromic sequence 5'-CTGTATATATATACAG-3'. In the presence of single-stranded DNA, RecA interacts with LexA causing an autocatalytic cleavage which disrupts the DNA-binding part of LexA, leading to derepression of the SOS regulon and eventually DNA repair. In Yersinia pseudotuberculosis serotype O:1b (strain IP 31758), this protein is LexA repressor.